The primary structure comprises 363 residues: rRNA processing protein rcl1 (363 aa).

This sequence belongs to the RNA 3'-terminal cyclase family. Type 2 subfamily. Interacts directly with bms1 and the U3 snoRNA to form a stable subcomplex. Component of the 90S small subunit processome also known as 90S pre-ribosome that consists of the 35S pre-rRNA, early-associating ribosomal proteins most of which are part of the small ribosomal subunit, the U3 snoRNA and associated proteins.

The protein resides in the nucleus. It is found in the nucleolus. Does not have cyclase activity. Plays a role in 40S-ribosomal-subunit biogenesis in the early pre-rRNA processing steps at sites A0, A1 and A2 that are required for proper maturation of the 18S RNA. Rcl1 activates bms1 by promoting GDP/GTP exchange. The chain is rRNA processing protein rcl1 (rcl1) from Schizosaccharomyces pombe (strain 972 / ATCC 24843) (Fission yeast).